The primary structure comprises 126 residues: Alpha-lactalbumin (126 aa).

The 126-residue stretch at 1-126 folds into the C-type lysozyme domain; it reads KVFEKCELSQ…CIADLDQWKC (126 aa). Cystine bridges form between Cys-6–Cys-126, Cys-30–Cys-117, Cys-63–Cys-82, and Cys-78–Cys-96. N-linked (GlcNAc...) asparagine glycosylation is present at Asn-47. Ca(2+) contacts are provided by Lys-84, Asp-87, Asp-89, Asp-92, and Asp-93.

The protein belongs to the glycosyl hydrolase 22 family. Lactose synthase (LS) is a heterodimer of a catalytic component, beta1,4-galactosyltransferase (beta4Gal-T1) and a regulatory component, alpha-lactalbumin (LA). As to expression, mammary gland specific. Secreted in milk.

The protein localises to the secreted. Regulatory subunit of lactose synthase, changes the substrate specificity of galactosyltransferase in the mammary gland making glucose a good acceptor substrate for this enzyme. This enables LS to synthesize lactose, the major carbohydrate component of milk. In other tissues, galactosyltransferase transfers galactose onto the N-acetylglucosamine of the oligosaccharide chains in glycoproteins. The chain is Alpha-lactalbumin (LALBA) from Tachyglossus aculeatus aculeatus (Southeast Australian short-beaked echidna).